The sequence spans 1134 residues: Vinculin (1134 aa).

The N-terminal globular head stretch occupies residues 1–835 (MPVFHTRTIE…GAVAKVREAF (835 aa)). Phosphoserine is present on Ser-97. Residues 168–208 (MTKMAKMIDERQQELTHQEHRVMLVNSMNTVKELLPVLISA) are talin-interaction. Lys-173 carries the N6-acetyllysine modification. A run of 3 repeats spans residues 259–369 (ASKD…KVEN), 370–479 (AARK…KTNR), and 480–589 (AVAN…RMQE). The tract at residues 259-589 (ASKDTEAMKR…LKDLKARMQE (331 aa)) is 3 X 112 AA tandem repeats. A phosphoserine mark is found at Ser-260, Ser-272, Ser-275, Ser-288, Ser-290, Ser-346, and Ser-434. An N6-acetyllysine modification is found at Lys-496. Tyr-537 carries the post-translational modification Phosphotyrosine. A phosphoserine mark is found at Ser-574, Ser-579, and Ser-600. A phosphothreonine mark is found at Thr-604 and Thr-672. Ser-721 is subject to Phosphoserine. The interval 741–764 (MANIQPQMLVAGATSIARRANRIL) is interaction with ACTN4. A phosphoserine mark is found at Ser-795 and Ser-809. At Tyr-822 the chain carries Phosphotyrosine. The segment at 836-878 (QPQEPDFPPPPPDLEQLRLTDELAPPKPPLPEGEVPPPRPPPP) is linker (Pro-rich). Residues 857–887 (ELAPPKPPLPEGEVPPPRPPPPEEKDEEFPE) are disordered. Pro residues predominate over residues 860-876 (PPKPPLPEGEVPPPRPP). Residues 879–1134 (EEKDEEFPEQ…RWVRKTPWYQ (256 aa)) form a C-terminal tail region. Facilitates phospholipid membrane insertion stretches follow at residues 1003 to 1046 (RLVR…KRIR) and 1120 to 1134 (AGFTLRWVRKTPWYQ). Tyr-1133 is subject to Phosphotyrosine; by SRC-type Tyr-kinases.

Belongs to the vinculin/alpha-catenin family. As to quaternary structure, exhibits self-association properties. Part of a complex composed of THSD1, PTK2/FAK1, TLN1 and VCL. Interacts with APBB1IP and NRAP. Interacts with TLN1. Interacts with CTNNB1 and this interaction is necessary for its localization to the cell-cell junctions and for its function in regulating cell surface expression of E-cadherin. Interacts with SYNM. Interacts with SORBS1. Interacts with CTNNA1. Binds to ACTN4; this interaction triggers conformational changes. Interacts with FLII. (Microbial infection) Interacts via its globular head domain with the central portion of S.flexneri IcsA (also called VirG). Phosphorylated; on serines, threonines and tyrosines. Phosphorylation on Tyr-1133 in activated platelets affects head-tail interactions and cell spreading but has no effect on actin binding nor on localization to focal adhesion plaques. In terms of processing, acetylated; mainly by myristic acid but also by a small amount of palmitic acid. Metavinculin is muscle-specific.

It localises to the cell membrane. The protein localises to the cell junction. It is found in the adherens junction. The protein resides in the focal adhesion. Its subcellular location is the cytoplasm. It localises to the cytoskeleton. The protein localises to the sarcolemma. It is found in the cell projection. The protein resides in the podosome. Functionally, actin filament (F-actin)-binding protein involved in cell-matrix adhesion and cell-cell adhesion. Regulates cell-surface E-cadherin expression and potentiates mechanosensing by the E-cadherin complex. May also play important roles in cell morphology and locomotion. The polypeptide is Vinculin (VCL) (Homo sapiens (Human)).